The sequence spans 351 residues: Phenylalanine--tRNA ligase alpha subunit (351 aa).

The disordered stretch occupies residues 45–69; the sequence is LGDDAPIPAARRSLGSLPKDQRKDA. Glu-269 is a Mg(2+) binding site.

Belongs to the class-II aminoacyl-tRNA synthetase family. Phe-tRNA synthetase alpha subunit type 1 subfamily. In terms of assembly, tetramer of two alpha and two beta subunits. Requires Mg(2+) as cofactor.

The protein localises to the cytoplasm. It catalyses the reaction tRNA(Phe) + L-phenylalanine + ATP = L-phenylalanyl-tRNA(Phe) + AMP + diphosphate + H(+). The polypeptide is Phenylalanine--tRNA ligase alpha subunit (Corynebacterium jeikeium (strain K411)).